The following is a 375-amino-acid chain: Flagellar P-ring protein (375 aa).

The signal sequence occupies residues 1-23 (MFNQSFLKYMLFGFFLFSFHAHA).

Belongs to the FlgI family. The basal body constitutes a major portion of the flagellar organelle and consists of four rings (L,P,S, and M) mounted on a central rod.

The protein resides in the bacterial flagellum basal body. Its function is as follows. Assembles around the rod to form the L-ring and probably protects the motor/basal body from shearing forces during rotation. The sequence is that of Flagellar P-ring protein from Buchnera aphidicola subsp. Baizongia pistaciae (strain Bp).